Reading from the N-terminus, the 122-residue chain is Large ribosomal subunit protein uL18 (122 aa).

This sequence belongs to the universal ribosomal protein uL18 family. In terms of assembly, part of the 50S ribosomal subunit; part of the 5S rRNA/L5/L18/L25 subcomplex. Contacts the 5S and 23S rRNAs.

This is one of the proteins that bind and probably mediate the attachment of the 5S RNA into the large ribosomal subunit, where it forms part of the central protuberance. The polypeptide is Large ribosomal subunit protein uL18 (Trichlorobacter lovleyi (strain ATCC BAA-1151 / DSM 17278 / SZ) (Geobacter lovleyi)).